The primary structure comprises 726 residues: Eukaryotic translation initiation factor 3 subunit B (726 aa).

The segment at 1–94 is sufficient for interaction with HCR1 and TIF32; it reads MSAALEDIKL…LFVECASPAD (94 aa). Residues 1 to 219 are sufficient for interaction with PIC8; the sequence is MSAALEDIKL…GVVMWGGPHF (219 aa). Residues 37 to 120 form the RRM domain; that stretch reads QYIVVCGAPV…HRLFIYTMRD (84 aa). 7 WD repeats span residues 142–182, 186–224, 235–283, 331–374, 442–485, 505–549, and 566–611; these read FPTS…EESV, RKNWSTNYIRFSPKGTYLFSYHPQGVVMWGGPHFDRLRR, VSPS…LQST, LKVP…MSCK, ELKD…FAPE, ITDK…TDKN, and NSFP…VKEE.

The protein belongs to the eIF-3 subunit B family. In terms of assembly, component of the eukaryotic translation initiation factor 3 (eIF-3) complex.

It localises to the cytoplasm. Its function is as follows. RNA-binding component of the eukaryotic translation initiation factor 3 (eIF-3) complex, which is involved in protein synthesis of a specialized repertoire of mRNAs and, together with other initiation factors, stimulates binding of mRNA and methionyl-tRNAi to the 40S ribosome. The eIF-3 complex specifically targets and initiates translation of a subset of mRNAs involved in cell proliferation. This is Eukaryotic translation initiation factor 3 subunit B from Vanderwaltozyma polyspora (strain ATCC 22028 / DSM 70294 / BCRC 21397 / CBS 2163 / NBRC 10782 / NRRL Y-8283 / UCD 57-17) (Kluyveromyces polysporus).